The following is a 492-amino-acid chain: Glutamyl-tRNA(Gln) amidotransferase subunit A (492 aa).

Active-site charge relay system residues include K78 and S158. S182 (acyl-ester intermediate) is an active-site residue.

Belongs to the amidase family. GatA subfamily. In terms of assembly, heterotrimer of A, B and C subunits.

The enzyme catalyses L-glutamyl-tRNA(Gln) + L-glutamine + ATP + H2O = L-glutaminyl-tRNA(Gln) + L-glutamate + ADP + phosphate + H(+). Functionally, allows the formation of correctly charged Gln-tRNA(Gln) through the transamidation of misacylated Glu-tRNA(Gln) in organisms which lack glutaminyl-tRNA synthetase. The reaction takes place in the presence of glutamine and ATP through an activated gamma-phospho-Glu-tRNA(Gln). In Zymomonas mobilis subsp. mobilis (strain ATCC 31821 / ZM4 / CP4), this protein is Glutamyl-tRNA(Gln) amidotransferase subunit A.